The primary structure comprises 144 residues: uncharacterized protein (144 aa).

Positions 1-23 (MRKILLFATVIGFLIMVSGTLSY) are cleaved as a signal peptide.

This is an uncharacterized protein from Archaeoglobus fulgidus (strain ATCC 49558 / DSM 4304 / JCM 9628 / NBRC 100126 / VC-16).